The chain runs to 176 residues: NAD(P)H-quinone oxidoreductase subunit 6, chloroplastic (176 aa).

The next 5 helical transmembrane spans lie at 10-30 (ILML…VLLT), 33-53 (IYSA…YFLL), 60-80 (VAQL…AVMF), 95-115 (IGDG…MTTI), and 152-172 (FYLP…GAIT).

The protein belongs to the complex I subunit 6 family. As to quaternary structure, NDH is composed of at least 16 different subunits, 5 of which are encoded in the nucleus.

Its subcellular location is the plastid. It is found in the chloroplast thylakoid membrane. It catalyses the reaction a plastoquinone + NADH + (n+1) H(+)(in) = a plastoquinol + NAD(+) + n H(+)(out). It carries out the reaction a plastoquinone + NADPH + (n+1) H(+)(in) = a plastoquinol + NADP(+) + n H(+)(out). In terms of biological role, NDH shuttles electrons from NAD(P)H:plastoquinone, via FMN and iron-sulfur (Fe-S) centers, to quinones in the photosynthetic chain and possibly in a chloroplast respiratory chain. The immediate electron acceptor for the enzyme in this species is believed to be plastoquinone. Couples the redox reaction to proton translocation, and thus conserves the redox energy in a proton gradient. The sequence is that of NAD(P)H-quinone oxidoreductase subunit 6, chloroplastic (ndhG) from Lolium perenne (Perennial ryegrass).